The primary structure comprises 347 residues: NADH-ubiquinone oxidoreductase chain 2 (347 aa).

10 consecutive transmembrane segments (helical) span residues 13–33, 59–79, 96–116, 122–142, 149–169, 178–198, 200–220, 240–260, 276–296, and 325–345; these read VILG…WIGF, YFFT…LNLM, MIMT…FWVP, IPLS…LTVL, INLT…GWGG, IMAY…IYNP, MTLL…MLFM, IVTI…LTGF, IILP…YMRL, and LLTP…MIII.

This sequence belongs to the complex I subunit 2 family. Core subunit of respiratory chain NADH dehydrogenase (Complex I) which is composed of 45 different subunits. Interacts with TMEM242.

It is found in the mitochondrion inner membrane. It catalyses the reaction a ubiquinone + NADH + 5 H(+)(in) = a ubiquinol + NAD(+) + 4 H(+)(out). Its function is as follows. Core subunit of the mitochondrial membrane respiratory chain NADH dehydrogenase (Complex I) which catalyzes electron transfer from NADH through the respiratory chain, using ubiquinone as an electron acceptor. Essential for the catalytic activity and assembly of complex I. This is NADH-ubiquinone oxidoreductase chain 2 from Molossus ater (Black mastiff bat).